The sequence spans 326 residues: Delta-aminolevulinic acid dehydratase (326 aa).

Residues cysteine 125, cysteine 127, and cysteine 135 each coordinate Zn(2+). Lysine 200 functions as the Schiff-base intermediate with substrate in the catalytic mechanism. Residues arginine 210 and arginine 222 each contribute to the 5-aminolevulinate site. Glutamate 238 lines the Mg(2+) pocket. The active-site Schiff-base intermediate with substrate is lysine 253. Serine 279 contributes to the 5-aminolevulinate binding site.

Belongs to the ALAD family. As to quaternary structure, homooctamer. It depends on Zn(2+) as a cofactor.

It catalyses the reaction 2 5-aminolevulinate = porphobilinogen + 2 H2O + H(+). It participates in porphyrin-containing compound metabolism; protoporphyrin-IX biosynthesis; coproporphyrinogen-III from 5-aminolevulinate: step 1/4. Functionally, catalyzes an early step in the biosynthesis of tetrapyrroles. Binds two molecules of 5-aminolevulinate per subunit, each at a distinct site, and catalyzes their condensation to form porphobilinogen. The sequence is that of Delta-aminolevulinic acid dehydratase (hemB) from Methanothermobacter thermautotrophicus (strain ATCC 29096 / DSM 1053 / JCM 10044 / NBRC 100330 / Delta H) (Methanobacterium thermoautotrophicum).